We begin with the raw amino-acid sequence, 345 residues long: Biotin synthase (345 aa).

The 219-residue stretch at Arg-38–Ser-256 folds into the Radical SAM core domain. [4Fe-4S] cluster-binding residues include Cys-53, Cys-57, and Cys-60. Positions 97, 128, 188, and 260 each coordinate [2Fe-2S] cluster.

Belongs to the radical SAM superfamily. Biotin synthase family. Homodimer. [4Fe-4S] cluster is required as a cofactor. The cofactor is [2Fe-2S] cluster.

It catalyses the reaction (4R,5S)-dethiobiotin + (sulfur carrier)-SH + 2 reduced [2Fe-2S]-[ferredoxin] + 2 S-adenosyl-L-methionine = (sulfur carrier)-H + biotin + 2 5'-deoxyadenosine + 2 L-methionine + 2 oxidized [2Fe-2S]-[ferredoxin]. Its pathway is cofactor biosynthesis; biotin biosynthesis; biotin from 7,8-diaminononanoate: step 2/2. Functionally, catalyzes the conversion of dethiobiotin (DTB) to biotin by the insertion of a sulfur atom into dethiobiotin via a radical-based mechanism. The chain is Biotin synthase from Yersinia pseudotuberculosis serotype O:1b (strain IP 31758).